We begin with the raw amino-acid sequence, 241 residues long: Small ribosomal subunit protein uS2 (241 aa).

It belongs to the universal ribosomal protein uS2 family.

The polypeptide is Small ribosomal subunit protein uS2 (Glaesserella parasuis serovar 5 (strain SH0165) (Haemophilus parasuis)).